We begin with the raw amino-acid sequence, 276 residues long: Bis(5'-nucleosyl)-tetraphosphatase, symmetrical (276 aa).

Belongs to the Ap4A hydrolase family.

The catalysed reaction is P(1),P(4)-bis(5'-adenosyl) tetraphosphate + H2O = 2 ADP + 2 H(+). Functionally, hydrolyzes diadenosine 5',5'''-P1,P4-tetraphosphate to yield ADP. The protein is Bis(5'-nucleosyl)-tetraphosphatase, symmetrical of Legionella pneumophila (strain Lens).